The sequence spans 72 residues: Translation initiation factor IF-1 (72 aa).

In terms of domain architecture, S1-like spans 1 to 72 (MAKEDNIEMQ…SKGRIVFRSR (72 aa)).

The protein belongs to the IF-1 family. In terms of assembly, component of the 30S ribosomal translation pre-initiation complex which assembles on the 30S ribosome in the order IF-2 and IF-3, IF-1 and N-formylmethionyl-tRNA(fMet); mRNA recruitment can occur at any time during PIC assembly.

The protein localises to the cytoplasm. One of the essential components for the initiation of protein synthesis. Stabilizes the binding of IF-2 and IF-3 on the 30S subunit to which N-formylmethionyl-tRNA(fMet) subsequently binds. Helps modulate mRNA selection, yielding the 30S pre-initiation complex (PIC). Upon addition of the 50S ribosomal subunit IF-1, IF-2 and IF-3 are released leaving the mature 70S translation initiation complex. The protein is Translation initiation factor IF-1 of Sodalis glossinidius (strain morsitans).